Here is a 304-residue protein sequence, read N- to C-terminus: Nucleotide-binding protein ROP_69550 (304 aa).

Position 24 to 31 (24 to 31 (GLSGAGLQ)) interacts with ATP. Position 75–78 (75–78 (DVRS)) interacts with GTP.

The protein belongs to the RapZ-like family.

Functionally, displays ATPase and GTPase activities. This chain is Nucleotide-binding protein ROP_69550, found in Rhodococcus opacus (strain B4).